We begin with the raw amino-acid sequence, 356 residues long: Cell division protein ZipA (356 aa).

The Periplasmic portion of the chain corresponds to 1 to 6 (MEDLQL). A helical membrane pass occupies residues 7 to 27 (VLFVLGAIAIVAVLVHGFWSI). Residues 28–356 (RRQQPKSLKD…DYLHRIRANA (329 aa)) are Cytoplasmic-facing. A disordered region spans residues 132 to 155 (PAQPDFSLQPPVAKEQHRGPKVSR).

It belongs to the ZipA family. As to quaternary structure, interacts with FtsZ via their C-terminal domains.

The protein resides in the cell inner membrane. In terms of biological role, essential cell division protein that stabilizes the FtsZ protofilaments by cross-linking them and that serves as a cytoplasmic membrane anchor for the Z ring. Also required for the recruitment to the septal ring of downstream cell division proteins. The chain is Cell division protein ZipA from Shewanella baltica (strain OS185).